Consider the following 151-residue polypeptide: MVGFKNRYMLMEVFLDPDKDLLGEGTPIILTQFNLSKAIKDSILVNFGECGLGSSLGSFQVKYVNPITKLCIVRSSREEHRQVWLAITLVKSIGNCPVILNLLDISGCIRACRDTALKCDKEKFEQCSKSLSEEEIRQMNTSLEKIKLLEN.

Belongs to the eukaryotic/archaeal RNase P protein component 2 family. Component of nuclear RNase P and RNase MRP ribonucleoproteins. Interacts with GAF1/RPP30.

It is found in the nucleus. The protein localises to the nucleolus. In terms of biological role, essential protein required during embryogenesis. Component of ribonuclease P, a protein complex that generates mature tRNA molecules by cleaving their 5'-ends. Also a component of RNase MRP. In Arabidopsis thaliana (Mouse-ear cress), this protein is Probable ribonuclease P/MRP protein subunit POP5 (EMB1687).